The primary structure comprises 172 residues: Male-specific submandibular salivary gland protein (172 aa).

A signal peptide spans 1 to 15 (MVKFLLLALALGVSC). N-linked (GlcNAc...) asparagine glycosylation occurs at asparagine 41. 2 cysteine pairs are disulfide-bonded: cysteine 60-cysteine 64 and cysteine 79-cysteine 170.

The protein belongs to the calycin superfamily. Lipocalin family. N-glycosylated. Expressed in acinar cells of the submandibular salivary gland from where it is secreted into saliva (at protein level). Also released from the submandibular salivary gland into blood and excreted in urine (at protein level). Expressed in the lacrimal gland from where it is secreted into tears (at protein level).

It is found in the secreted. Its subcellular location is the cytoplasm. The sequence is that of Male-specific submandibular salivary gland protein from Mesocricetus auratus (Golden hamster).